A 564-amino-acid chain; its full sequence is Formate--tetrahydrofolate ligase (564 aa).

Thr-65–Thr-72 lines the ATP pocket.

This sequence belongs to the formate--tetrahydrofolate ligase family.

The catalysed reaction is (6S)-5,6,7,8-tetrahydrofolate + formate + ATP = (6R)-10-formyltetrahydrofolate + ADP + phosphate. The protein operates within one-carbon metabolism; tetrahydrofolate interconversion. The protein is Formate--tetrahydrofolate ligase of Roseiflexus sp. (strain RS-1).